The primary structure comprises 135 residues: Global transcriptional regulator Spx 2 (135 aa).

Cysteine 10 is a catalytic residue.

This sequence belongs to the ArsC family. Spx subfamily. As to quaternary structure, interacts with the C-terminal domain of the alpha subunit of the RNAP.

It localises to the cytoplasm. Global transcriptional regulator that plays a key role in stress response and exerts either positive or negative regulation of genes. Acts by interacting with the C-terminal domain of the alpha subunit of the RNA polymerase (RNAP). This interaction can enhance binding of RNAP to the promoter region of target genes and stimulate their transcription, or block interaction of RNAP with activator. The sequence is that of Global transcriptional regulator Spx 2 from Oceanobacillus iheyensis (strain DSM 14371 / CIP 107618 / JCM 11309 / KCTC 3954 / HTE831).